Consider the following 1032-residue polypeptide: Importin beta-like protein KAP120 (1032 aa).

Residue Ala2 is modified to N-acetylalanine. Residues 31–103 (AEQQLRQWET…RGRLFEMIDE (73 aa)) enclose the Importin N-terminal domain.

The protein belongs to the importin beta family. Interacts with GTP-bound GSP1 and RFP1. Associates with the nuclear pore complex.

It is found in the cytoplasm. The protein resides in the nucleus. In terms of biological role, functions in nuclear protein import as nuclear transport receptor. Serves as receptor for nuclear localization signals (NLS) in cargo substrates. Thought to mediate docking of the importin/substrate complex to the nuclear pore complex (NPC) through binding to nucleoporin and the complex is subsequently translocated through the pore by an energy requiring, RAN-dependent mechanism. Required for nuclear import of Ho endonuclease and RFP1, and involved in rRNA-processing and assembly or export of 60S ribosomal subunits. This is Importin beta-like protein KAP120 (KAP120) from Saccharomyces cerevisiae (strain ATCC 204508 / S288c) (Baker's yeast).